The primary structure comprises 400 residues: Cytohesin-2 (400 aa).

Residues 10-63 (DLTPEERMELENIRRRKQELLVEIQRLREELSEAMSEVEGLEANEGSKTLQRNR) adopt a coiled-coil conformation. The SEC7 domain maps to 72 to 201 (FNMDPKKGIQ…VIMLNTSLHN (130 aa)). The PH domain maps to 259–376 (NPDREGWLLK…WIKSIQAAVS (118 aa)). A 1,2-diacyl-sn-glycero-3-phospho-(1D-myo-inositol-3,4,5-trisphosphate) is bound by residues 268–276 (KLGGGRVKT), Arg280, Tyr291, Arg301, Lys339, Asn350, and His351. The C-terminal autoinhibitory region stretch occupies residues 387-395 (RKKRISVKK).

Heteromer. Composed of TAMALIN, CYTH2 and at least one GRM1. Interacts with ARRB1. Interacts with ARL4D; the interaction is direct. Directly interacts with CCDC120 through the coiled coil domain; this interaction stabilizes CCDC120, possibly by preventing its ubiquitination, and is required for neurite growth in neuroblastoma cells. Interacts with ARF1. Interacts with FRMD4A. Interacts (via N-terminal domain) with INAVA (via N-terminal domain). In terms of tissue distribution, widely expressed.

The protein localises to the cell membrane. Its subcellular location is the cytoplasm. It localises to the cell projection. The protein resides in the growth cone. It is found in the cell junction. The protein localises to the tight junction. Its subcellular location is the adherens junction. In terms of biological role, acts as a guanine-nucleotide exchange factor (GEF). Promotes guanine-nucleotide exchange on ARF1, ARF3 and ARF6. Activates ARF factors through replacement of GDP with GTP. The cell membrane form, in association with ARL4 proteins, recruits ARF6 to the plasma membrane. Involved in neurite growth. The polypeptide is Cytohesin-2 (Homo sapiens (Human)).